Reading from the N-terminus, the 308-residue chain is High-affinity branched-chain amino acid transport system permease protein LivH (308 aa).

The Cytoplasmic segment spans residues 1–21 (MSEQFLYFLQQMFNGVTLGST). Residues 22 to 42 (YALIAIGYTMVYGIIGMINFA) traverse the membrane as a helical segment. The Periplasmic segment spans residues 43–45 (HGE). The helical transmembrane segment at 46-66 (VYMIGSYVSFMIIAALMMMGI) threads the bilayer. At 67 to 68 (DT) the chain is on the cytoplasmic side. The helical transmembrane segment at 69–89 (GWLLVAAGFVGAIVIASAYGW) threads the bilayer. Topologically, residues 90-104 (SIERVAYRPVRNSKR) are periplasmic. The chain crosses the membrane as a helical span at residues 105–125 (LIALISAIGMSIFLQNYVSLT). Residues 126–154 (EGSRDVALPSLFNGQWVVGHSENFSASIT) lie on the Cytoplasmic side of the membrane. The chain crosses the membrane as a helical span at residues 155–175 (TMQAVIWIVTFLAMLALTIFI). Residues 176-203 (RYSRMGRACRACAEDLKMASLLGINTDR) lie on the Periplasmic side of the membrane. The helical transmembrane segment at 204 to 224 (VIALTFVIGAAMAAVAGVLLG) threads the bilayer. The Cytoplasmic portion of the chain corresponds to 225-245 (QFYGVINPYIGFMAGMKAFTA). The chain crosses the membrane as a helical span at residues 246–266 (AVLGGIGSIPGAMIGGLILGI). Residues 267 to 280 (AEALSSAYLSTEYK) are Periplasmic-facing. The helical transmembrane segment at 281–301 (DVVSFALLILVLLVMPTGILG) threads the bilayer. Topologically, residues 302 to 308 (RPEVEKV) are cytoplasmic.

The protein belongs to the binding-protein-dependent transport system permease family. LivHM subfamily.

The protein localises to the cell inner membrane. In terms of biological role, part of the binding-protein-dependent transport system for branched-chain amino acids. Probably responsible for the translocation of the substrates across the membrane. This is High-affinity branched-chain amino acid transport system permease protein LivH (livH) from Escherichia coli O157:H7.